The following is a 51-amino-acid chain: Large ribosomal subunit protein eL39 (51 aa).

The protein belongs to the eukaryotic ribosomal protein eL39 family. As to quaternary structure, part of the 50S ribosomal subunit.

In Pyrococcus furiosus (strain ATCC 43587 / DSM 3638 / JCM 8422 / Vc1), this protein is Large ribosomal subunit protein eL39.